The chain runs to 136 residues: uncharacterized protein (136 aa).

Residues 1–19 (MKKLLMVILGIALIGMAYA) form the signal peptide.

This is an uncharacterized protein from Methanocaldococcus jannaschii (strain ATCC 43067 / DSM 2661 / JAL-1 / JCM 10045 / NBRC 100440) (Methanococcus jannaschii).